Reading from the N-terminus, the 359-residue chain is MKNTKIKIIITGGGSGGHVFVGLSIAEQLIKIGCEILWIGSSDRIESYLIPKSNIKIYKINVIGFNGNNIFLKLISLIKTAYSILKIKKLIKYYKPDIVLSIGGYVSFPGAIATWISKVPLIIHEQNSVPGLSNYILYKLTNCKILQAFPNTFPRAKVVGNPIRNAILKIKTPEKRFLGRFGPLRILVIGGSQGASILNLVIPDVAKYLPNKFHIWHQSGYSEYELVKSKYEKLFHHTEYKVFDFIKDISIAYEWADLIICRSGALTVSEISSIGIAALFVPYNHKDNHQYWNAKILEKIGAAEIINQKDFTKKKLIKLLSSWDRKKSLIMSQKSKNLSITNSAKKIIKEINNLIGLVK.

Residues Ser-15–Gly-17, Asn-127, Arg-164, Ser-192, Ile-246, Ala-265–Glu-270, and Gln-290 contribute to the UDP-N-acetyl-alpha-D-glucosamine site.

It belongs to the glycosyltransferase 28 family. MurG subfamily.

It is found in the cell membrane. The catalysed reaction is di-trans,octa-cis-undecaprenyl diphospho-N-acetyl-alpha-D-muramoyl-L-alanyl-D-glutamyl-meso-2,6-diaminopimeloyl-D-alanyl-D-alanine + UDP-N-acetyl-alpha-D-glucosamine = di-trans,octa-cis-undecaprenyl diphospho-[N-acetyl-alpha-D-glucosaminyl-(1-&gt;4)]-N-acetyl-alpha-D-muramoyl-L-alanyl-D-glutamyl-meso-2,6-diaminopimeloyl-D-alanyl-D-alanine + UDP + H(+). It participates in cell wall biogenesis; peptidoglycan biosynthesis. Functionally, cell wall formation. Catalyzes the transfer of a GlcNAc subunit on undecaprenyl-pyrophosphoryl-MurNAc-pentapeptide (lipid intermediate I) to form undecaprenyl-pyrophosphoryl-MurNAc-(pentapeptide)GlcNAc (lipid intermediate II). This is UDP-N-acetylglucosamine--N-acetylmuramyl-(pentapeptide) pyrophosphoryl-undecaprenol N-acetylglucosamine transferase from Wigglesworthia glossinidia brevipalpis.